The sequence spans 210 residues: Putative cutinase (210 aa).

Basic and acidic residues predominate over residues 26 to 38 (DSERLPLKRDEPG). Residues 26-58 (DSERLPLKRDEPGSRSMRSTFIPSSQCSNLSSA) form a disordered region. Low complexity predominate over residues 49 to 58 (SSQCSNLSSA).

The enzyme catalyses cutin + H2O = cutin monomers.. The sequence is that of Putative cutinase from Phytophthora capsici.